A 333-amino-acid chain; its full sequence is UbiA prenyltransferase domain-containing protein 1 (333 aa).

The segment at N13–P33 is disordered. Helical transmembrane passes span L78–T98, F129–T149, L155–F175, Y177–A197, A199–S219, I240–L260, L265–I285, and L310–L330.

This sequence belongs to the UbiA prenyltransferase family.

The protein resides in the endoplasmic reticulum membrane. The protein localises to the golgi apparatus membrane. Its subcellular location is the mitochondrion membrane. It carries out the reaction menadiol + (2E,6E,10E)-geranylgeranyl diphosphate = menaquinol-4 + diphosphate. The enzyme catalyses all-trans-decaprenyl diphosphate + 4-hydroxybenzoate = 4-hydroxy-3-(all-trans-decaprenyl)benzoate + diphosphate. It participates in quinol/quinone metabolism; menaquinone biosynthesis. It functions in the pathway cofactor biosynthesis; ubiquinone biosynthesis. Prenyltransferase that mediates the formation of menaquinone-4 (MK-4) and coenzyme Q10. MK-4 is a vitamin K2 isoform required for endothelial cell development. Mediates the conversion of phylloquinone (PK) into MK-4, probably by cleaving the side chain of phylloquinone (PK) to release 2-methyl-1,4-naphthoquinone (menadione; K3) and then prenylating it with geranylgeranyl pyrophosphate (GGPP) to form MK-4. Also plays a role in cardiovascular development independently of MK-4 biosynthesis, by acting as a coenzyme Q10 biosynthetic enzyme: coenzyme Q10, also named ubiquinone, plays an important antioxidant role in the cardiovascular system. Mediates biosynthesis of coenzyme Q10 in the Golgi membrane, leading to protect cardiovascular tissues from NOS3/eNOS-dependent oxidative stress. The protein is UbiA prenyltransferase domain-containing protein 1 (UBIAD1) of Gallus gallus (Chicken).